The chain runs to 366 residues: Tudor domain-containing protein 10 (366 aa).

The 74-residue stretch at Thr-34–Arg-107 folds into the RRM domain. Residues Phe-210–Lys-317 form the Tudor domain. A coiled-coil region spans residues Thr-216–Gln-237.

The protein is Tudor domain-containing protein 10 (TDRD10) of Homo sapiens (Human).